The sequence spans 142 residues: Hemoglobin subunit alpha-1 (142 aa).

The Globin domain maps to 2–142 (KLTAEDKHNV…VAYVLASKYR (141 aa)). Histidine 59 is an O2 binding site. Heme b is bound at residue histidine 88.

This sequence belongs to the globin family. Major hemoglobin is a heterotetramer of two alpha-1 chains and two beta-1 chains. Red blood cells.

Functionally, involved in oxygen transport from the lung to the various peripheral tissues. The sequence is that of Hemoglobin subunit alpha-1 from Pleurodeles waltl (Iberian ribbed newt).